Reading from the N-terminus, the 515-residue chain is Bifunctional pantoate ligase/cytidylate kinase (515 aa).

Residues 1 to 279 are pantoate--beta-alanine ligase; that stretch reads MKVVETVARL…VGSTRLIDNV (279 aa). Position 31–38 (31–38) interacts with ATP; it reads MGALHEGH. His-38 (proton donor) is an active-site residue. Gln-62 is a (R)-pantoate binding site. Residue Gln-62 participates in beta-alanine binding. 149 to 152 lines the ATP pocket; sequence GQKD. Gln-155 lines the (R)-pantoate pocket. ATP is bound by residues Val-178 and 186–189; that span reads LSSR. Residues 280 to 515 are cytidylate kinase; that stretch reads VLGQHHERRP…LYRDKVGGSV (236 aa).

The protein in the N-terminal section; belongs to the pantothenate synthetase family. In the C-terminal section; belongs to the cytidylate kinase family. Type 1 subfamily.

The protein resides in the cytoplasm. The catalysed reaction is (R)-pantoate + beta-alanine + ATP = (R)-pantothenate + AMP + diphosphate + H(+). It carries out the reaction CMP + ATP = CDP + ADP. It catalyses the reaction dCMP + ATP = dCDP + ADP. It functions in the pathway cofactor biosynthesis; (R)-pantothenate biosynthesis; (R)-pantothenate from (R)-pantoate and beta-alanine: step 1/1. In terms of biological role, catalyzes the condensation of pantoate with beta-alanine in an ATP-dependent reaction via a pantoyl-adenylate intermediate. Its function is as follows. Catalyzes the transfer of a phosphate group from ATP to either CMP or dCMP to form CDP or dCDP and ADP, respectively. This Gloeobacter violaceus (strain ATCC 29082 / PCC 7421) protein is Bifunctional pantoate ligase/cytidylate kinase.